Consider the following 142-residue polypeptide: NCT transcriptional regulatory complex subunit B (142 aa).

Belongs to the NC2 beta/DR1 family. As to quaternary structure, forms the NCT transcriptional regulatory complex with nctA and mot1.

Its subcellular location is the nucleus. Functionally, part of the NCT transcriptional regulatory complex that acts as a key regulator of ergosterol biosynthesis and the azole exporter cdr1B. The NCT complex binds the promoters of genes linked to azole susceptibility, and especially represses the expression of cdr1B transporter. The chain is NCT transcriptional regulatory complex subunit B from Aspergillus fumigatus (strain CBS 144.89 / FGSC A1163 / CEA10) (Neosartorya fumigata).